We begin with the raw amino-acid sequence, 469 residues long: Bifunctional protein GlmU (469 aa).

Positions 1-237 are pyrophosphorylase; the sequence is MTTNRKFAIA…SHEVLGVNTR (237 aa). Residues 12 to 15, Lys26, Gln78, 83 to 84, 105 to 107, Gly144, Glu162, Asn177, and Asn235 each bind UDP-N-acetyl-alpha-D-glucosamine; these read LAAG, GT, and SGD. Asp107 contributes to the Mg(2+) binding site. Residue Asn235 participates in Mg(2+) binding. The interval 238 to 258 is linker; it reads QDLASLDAHLRLQKCQQLMSA. Positions 259-469 are N-acetyltransferase; sequence GVSIFKPETC…KKRAEQKKKK (211 aa). Residues Arg341 and Lys359 each contribute to the UDP-N-acetyl-alpha-D-glucosamine site. The active-site Proton acceptor is the His371. The UDP-N-acetyl-alpha-D-glucosamine site is built by Tyr374 and Asn385. Acetyl-CoA contacts are provided by residues Ala388, 394 to 395, Ser413, Ala431, and Arg448; that span reads NY.

This sequence in the N-terminal section; belongs to the N-acetylglucosamine-1-phosphate uridyltransferase family. In the C-terminal section; belongs to the transferase hexapeptide repeat family. In terms of assembly, homotrimer. The cofactor is Mg(2+).

It localises to the cytoplasm. The enzyme catalyses alpha-D-glucosamine 1-phosphate + acetyl-CoA = N-acetyl-alpha-D-glucosamine 1-phosphate + CoA + H(+). It carries out the reaction N-acetyl-alpha-D-glucosamine 1-phosphate + UTP + H(+) = UDP-N-acetyl-alpha-D-glucosamine + diphosphate. Its pathway is nucleotide-sugar biosynthesis; UDP-N-acetyl-alpha-D-glucosamine biosynthesis; N-acetyl-alpha-D-glucosamine 1-phosphate from alpha-D-glucosamine 6-phosphate (route II): step 2/2. It functions in the pathway nucleotide-sugar biosynthesis; UDP-N-acetyl-alpha-D-glucosamine biosynthesis; UDP-N-acetyl-alpha-D-glucosamine from N-acetyl-alpha-D-glucosamine 1-phosphate: step 1/1. The protein operates within bacterial outer membrane biogenesis; LPS lipid A biosynthesis. In terms of biological role, catalyzes the last two sequential reactions in the de novo biosynthetic pathway for UDP-N-acetylglucosamine (UDP-GlcNAc). The C-terminal domain catalyzes the transfer of acetyl group from acetyl coenzyme A to glucosamine-1-phosphate (GlcN-1-P) to produce N-acetylglucosamine-1-phosphate (GlcNAc-1-P), which is converted into UDP-GlcNAc by the transfer of uridine 5-monophosphate (from uridine 5-triphosphate), a reaction catalyzed by the N-terminal domain. The polypeptide is Bifunctional protein GlmU (Koribacter versatilis (strain Ellin345)).